The sequence spans 78 residues: Large ribosomal subunit protein bL28 (78 aa).

Residues 1–22 form a disordered region; sequence MAKVCQVTGKRPVTGHNVSHAK.

It belongs to the bacterial ribosomal protein bL28 family.

The sequence is that of Large ribosomal subunit protein bL28 from Teredinibacter turnerae (strain ATCC 39867 / T7901).